The following is a 686-amino-acid chain: U3 small nucleolar RNA-associated protein 4 homolog (686 aa).

14 WD repeats span residues 7 to 50 (HRVR…ANYF), 51 to 92 (QEKF…QALN), 93 to 135 (IKYA…PDKI), 136 to 181 (QFER…AVHK), 182 to 226 (MIVD…SATG), 227 to 275 (TLVK…SSEK), 276 to 317 (QWVR…LMEK), 318 to 377 (VEVK…PLSK), 378 to 427 (NADH…NISL), 428 to 475 (KRVS…KHLH), 476 to 516 (AFQP…VKQL), 517 to 566 (KLHC…WSRT), 567 to 627 (VQKQ…FPPT), and 628 to 666 (NESD…AVER). A Glycyl lysine isopeptide (Lys-Gly) (interchain with G-Cter in SUMO2) cross-link involves residue Lys-321.

As to quaternary structure, interacts with HIVEP1 Interacts with NOL11. Part of the small subunit (SSU) processome, composed of more than 70 proteins and the RNA chaperone small nucleolar RNA (snoRNA) U3. May be a component of the proposed t-UTP subcomplex of the ribosomal small subunit (SSU) processome containing at least UTP4, WDR43, HEATR1, UTP15, WDR75. In terms of processing, may be phosphorylated during mitosis; may control the association of this protein with WRD43 and UTP15.

The protein resides in the nucleus. It localises to the nucleolus. The protein localises to the chromosome. Ribosome biogenesis factor. Involved in nucleolar processing of pre-18S ribosomal RNA. Part of the small subunit (SSU) processome, first precursor of the small eukaryotic ribosomal subunit. During the assembly of the SSU processome in the nucleolus, many ribosome biogenesis factors, an RNA chaperone and ribosomal proteins associate with the nascent pre-rRNA and work in concert to generate RNA folding, modifications, rearrangements and cleavage as well as targeted d Involved in SSU pre-rRNA processing at sites A', A0, 1 and 2b. Required for optimal pre-ribosomal RNA transcription by RNA polymerase. May be a transcriptional regulator. In terms of biological role, (Microbial infection) Acts as a positive regulator of HIVEP1 which specifically binds to the DNA sequence 5'-GGGACTTTCC-3' found in enhancer elements of numerous viral promoters such as those of HIV-1, SV40, or CMV. The chain is U3 small nucleolar RNA-associated protein 4 homolog from Homo sapiens (Human).